The following is a 626-amino-acid chain: Receptor-like protein 4 (626 aa).

An N-terminal signal peptide occupies residues 1–22 (MMLRFILASLLLSSFSLYSSLA). The Extracellular segment spans residues 23–549 (RPAPYALRIS…CGPHLSSGAK (527 aa)). 4 N-linked (GlcNAc...) asparagine glycosylation sites follow: Asn61, Asn282, Asn333, and Asn417. LRR repeat units lie at residues 420–444 (RWFI…ISKL), 445–468 (KHLQ…LGSV), 470–492 (SLEV…LGEL), and 493–516 (TSLR…VGGR). N-linked (GlcNAc...) asparagine glycosylation is found at Asn451 and Asn482. Asn524 carries an N-linked (GlcNAc...) asparagine glycan. The chain crosses the membrane as a helical span at residues 550–570 (IGIAFGVSLAFLLIVACAMIW). Topologically, residues 571–626 (WKRRQNILRAQQIAARGAPYAKKRTHVSHDIQMSRHGHNNHGQARTAVENGPSLLS) are cytoplasmic. A disordered region spans residues 603 to 626 (MSRHGHNNHGQARTAVENGPSLLS).

The protein belongs to the RLP family.

It localises to the cell membrane. The sequence is that of Receptor-like protein 4 from Arabidopsis thaliana (Mouse-ear cress).